We begin with the raw amino-acid sequence, 244 residues long: Probable transcriptional regulatory protein BT0025 (244 aa).

The protein belongs to the TACO1 family.

It localises to the cytoplasm. This chain is Probable transcriptional regulatory protein BT0025, found in Borrelia turicatae (strain 91E135).